Consider the following 147-residue polypeptide: NAD(P)H-quinone oxidoreductase subunit N (147 aa).

The protein belongs to the complex I NdhN subunit family. As to quaternary structure, NDH-1 can be composed of about 15 different subunits; different subcomplexes with different compositions have been identified which probably have different functions.

It is found in the cellular thylakoid membrane. It catalyses the reaction a plastoquinone + NADH + (n+1) H(+)(in) = a plastoquinol + NAD(+) + n H(+)(out). It carries out the reaction a plastoquinone + NADPH + (n+1) H(+)(in) = a plastoquinol + NADP(+) + n H(+)(out). NDH-1 shuttles electrons from an unknown electron donor, via FMN and iron-sulfur (Fe-S) centers, to quinones in the respiratory and/or the photosynthetic chain. The immediate electron acceptor for the enzyme in this species is believed to be plastoquinone. Couples the redox reaction to proton translocation, and thus conserves the redox energy in a proton gradient. Cyanobacterial NDH-1 also plays a role in inorganic carbon-concentration. This Synechococcus sp. (strain JA-2-3B'a(2-13)) (Cyanobacteria bacterium Yellowstone B-Prime) protein is NAD(P)H-quinone oxidoreductase subunit N.